Consider the following 386-residue polypeptide: S-adenosylmethionine synthase (386 aa).

Histidine 16 contributes to the ATP binding site. Aspartate 18 contributes to the Mg(2+) binding site. Glutamate 44 provides a ligand contact to K(+). L-methionine is bound by residues glutamate 57 and glutamine 100. The segment at 100 to 110 (QSPDINQGVDQ) is flexible loop. ATP is bound by residues 164–166 (DGK), 230–231 (RF), aspartate 239, 245–246 (RK), alanine 262, and lysine 266. Residue aspartate 239 coordinates L-methionine. Lysine 270 is an L-methionine binding site.

The protein belongs to the AdoMet synthase family. As to quaternary structure, homotetramer; dimer of dimers. The cofactor is Mg(2+). Requires K(+) as cofactor.

Its subcellular location is the cytoplasm. It carries out the reaction L-methionine + ATP + H2O = S-adenosyl-L-methionine + phosphate + diphosphate. Its pathway is amino-acid biosynthesis; S-adenosyl-L-methionine biosynthesis; S-adenosyl-L-methionine from L-methionine: step 1/1. Catalyzes the formation of S-adenosylmethionine (AdoMet) from methionine and ATP. The overall synthetic reaction is composed of two sequential steps, AdoMet formation and the subsequent tripolyphosphate hydrolysis which occurs prior to release of AdoMet from the enzyme. In Nitratiruptor sp. (strain SB155-2), this protein is S-adenosylmethionine synthase.